Consider the following 219-residue polypeptide: Large ribosomal subunit protein uL16 (219 aa).

It belongs to the universal ribosomal protein uL16 family. In terms of assembly, component of the small ribosomal subunit. Mature ribosomes consist of a small (40S) and a large (60S) subunit. The 40S subunit contains about 33 different proteins and 1 molecule of RNA (18S). The 60S subunit contains about 49 different proteins and 3 molecules of RNA (25S, 5.8S and 5S).

The chain is Large ribosomal subunit protein uL16 (RPL10) from Solanum melongena (Eggplant).